A 218-amino-acid chain; its full sequence is 7-cyano-7-deazaguanine synthase (218 aa).

ATP is bound at residue 9–19; it reads YSGGMDSFTVL. Zn(2+) is bound by residues Cys-185, Cys-193, Cys-196, and Cys-199.

The protein belongs to the QueC family. Zn(2+) is required as a cofactor.

The enzyme catalyses 7-carboxy-7-deazaguanine + NH4(+) + ATP = 7-cyano-7-deazaguanine + ADP + phosphate + H2O + H(+). It participates in purine metabolism; 7-cyano-7-deazaguanine biosynthesis. Catalyzes the ATP-dependent conversion of 7-carboxy-7-deazaguanine (CDG) to 7-cyano-7-deazaguanine (preQ(0)). The protein is 7-cyano-7-deazaguanine synthase of Alteromonas mediterranea (strain DSM 17117 / CIP 110805 / LMG 28347 / Deep ecotype).